Here is a 295-residue protein sequence, read N- to C-terminus: Autophagy-related protein 37 (295 aa).

The region spanning 5–103 is the ACB domain; the sequence is VDRVFVHALN…LIDTMHRYAT (99 aa). Disordered stretches follow at residues 124 to 162 and 174 to 201; these read NSPS…PLKE and LRSQ…RWQR. Low complexity predominate over residues 125–153; sequence SPSSSLSSPRPNQSTGAGAQQPQQEPEQA. Asn136 carries an N-linked (GlcNAc...) asparagine glycan. Residues 244–264 form a helical membrane-spanning segment; the sequence is WLLVKHIFADLVILSVVLLWL.

This sequence belongs to the ATG37 family.

It localises to the peroxisome membrane. In terms of biological role, acyl-CoA binding protein which acts as the peroxisome receptor for pexophagy. Required for both micropexophagy and macropexophagy, but not for the cytoplasm to vacuole transport (Cvt) or autophagy pathways. Required for functional micropexophagic apparatus (MIPA) and relocation of ATG11 to the peroxisome-sequestering arms of the vacuole. Binds palmitoyl-CoA but not oleyl-CoA. The sequence is that of Autophagy-related protein 37 from Gibberella zeae (strain ATCC MYA-4620 / CBS 123657 / FGSC 9075 / NRRL 31084 / PH-1) (Wheat head blight fungus).